Here is a 115-residue protein sequence, read N- to C-terminus: Large ribosomal subunit protein eL36 (115 aa).

Belongs to the eukaryotic ribosomal protein eL36 family. In terms of assembly, component of the large ribosomal subunit.

The protein localises to the cytoplasm. The protein resides in the cytosol. In terms of biological role, component of the large ribosomal subunit. This Drosophila melanogaster (Fruit fly) protein is Large ribosomal subunit protein eL36 (RpL36).